Reading from the N-terminus, the 505-residue chain is Lysine--tRNA ligase (505 aa).

Mg(2+)-binding residues include Glu-415 and Glu-422.

The protein belongs to the class-II aminoacyl-tRNA synthetase family. Homodimer. Requires Mg(2+) as cofactor.

Its subcellular location is the cytoplasm. It catalyses the reaction tRNA(Lys) + L-lysine + ATP = L-lysyl-tRNA(Lys) + AMP + diphosphate. In Escherichia coli O157:H7, this protein is Lysine--tRNA ligase.